The following is a 338-amino-acid chain: Glutamyl-tRNA reductase (338 aa).

Residues 50–53, Ser102, 107–109, and Gln113 each bind substrate; these read TCHR and ETE. Catalysis depends on Cys51, which acts as the Nucleophile. 181-186 serves as a coordination point for NADP(+); sequence GYSDIN.

The protein belongs to the glutamyl-tRNA reductase family. Homodimer.

It carries out the reaction (S)-4-amino-5-oxopentanoate + tRNA(Glu) + NADP(+) = L-glutamyl-tRNA(Glu) + NADPH + H(+). The protein operates within porphyrin-containing compound metabolism; protoporphyrin-IX biosynthesis; 5-aminolevulinate from L-glutamyl-tRNA(Glu): step 1/2. Its function is as follows. Catalyzes the NADPH-dependent reduction of glutamyl-tRNA(Glu) to glutamate 1-semialdehyde (GSA). The sequence is that of Glutamyl-tRNA reductase from Chlamydia caviae (strain ATCC VR-813 / DSM 19441 / 03DC25 / GPIC) (Chlamydophila caviae).